A 686-amino-acid chain; its full sequence is MGCFCAVPEEFYCEVLLLDESKLTLTTQQQGIKKSTKGSVVLDHVFHHVNLVEIDYFGLRYCDRSHQTYWLDPAKTLAEHKELINTGPPYTLYFGIKFYAEDPCKLKEEITRYQFFLQVKQDVLQGRLPCPVNTAAQLGAYAIQSELGDYDPYKHTAGYVSEYRFVPDQKEELEEAIERIHKTLMGQIPSEAELNYLRTAKSLEMYGVDLHPVYGENKSEYFLGLTPVGVVVYKNKKQVGKYFWPRITKVHFKETQFELRVLGKDCNETSFFFEARSKTACKHLWKCSVEHHTFFRMPENESNSLSRKLSKFGSIRYKHRYSGRTALQMSRDLSIQLPRPDQNVTRSRSKTYPKRIAQTQPAESNSISRITANMENGENEGTIKIIAPSPVKSFKKAKNENSPDTQRSKSHAPWEENGPQSGLYNSPSDRTKSPKFPYTRRRNPSCGSDNDSVQPVRRRKAHNSGEDSDLKQRRRSRSRCNTSSGSESENSNREYRKKRNRIRQENDMVDSAPQWEAVLRRQKEKNQADPNNRRSRHRSRSRSPDIQAKEELWKHIQKELVDPSGLSEEQLKEIPYTKIETQGDPIRIRHSHSPRSYRQYRRSQCSDGERSVLSEVNSKTDLVPPLPVTRSSDAQGSGDATVHQRRNGSKDSLMEEKPQTSTNNLAGKHTAKTIKTIQASRLKTET.

Positions Phe11–Glu299 constitute an FERM domain. Residue Ser304 is modified to Phosphoserine. The tract at residues Arg331–Thr686 is disordered. Over residues Ala357 to Asn376 the composition is skewed to polar residues. Ser389, Ser393, and Ser402 each carry phosphoserine. Residues Gly418–Ser428 show a composition bias toward polar residues. A compositionally biased stretch (low complexity) spans Arg479–Glu489. 2 stretches are compositionally biased toward basic and acidic residues: residues Val518–Gln527 and Gln547–Val561. Over residues Ile588–Arg601 the composition is skewed to basic residues. Residues Gly648–Pro658 are compositionally biased toward basic and acidic residues. The span at Thr673–Thr686 shows a compositional bias: polar residues.

Expressed in many tissues. High levels of expression in brain, liver, thymus and peripheral blood leukocytes and low levels of expression in heart, kidney, testis and colon.

It is found in the cytoplasm. The protein localises to the cytoskeleton. The protein is Band 4.1-like protein 4A of Homo sapiens (Human).